Reading from the N-terminus, the 288-residue chain is Serine/threonine-protein phosphatase PGAM5, mitochondrial (288 aa).

The Mitochondrial matrix segment spans residues Met-1–Ala-6. The helical transmembrane segment at Leu-7–Gly-29 threads the bilayer. The Mitochondrial intermembrane segment spans residues Lys-30–Ser-288. The interval Asn-76 to Glu-81 is interaction with KEAP1. Residues Ser-79 and Ser-86 each carry the phosphoserine modification. N6-acetyllysine is present on residues Lys-115, Lys-143, and Lys-190.

It belongs to the phosphoglycerate mutase family. BPG-dependent PGAM subfamily. Dimer. Forms a ternary complex with NFE2L2 and KEAP1. Interacts with BCL2L1 and MAP3K5. Upon TNF-induced necrosis, forms in complex with RIPK1, RIPK3 and MLKL; the formation of this complex leads to PGAM5 phosphorylation. Isoform 2, but not isoform 1, interacts with DNM1L; this interaction leads to DNM1L dephosphorylation and activation and eventually to mitochondria fragmentation. Post-translationally, phosphorylated by the RIPK1/RIPK3 complex under necrotic conditions. This phosphorylation increases PGAM5 phosphatase activity. Proteolytically cleaved by PARL in response to loss of mitochondrial membrane potential.

The protein resides in the mitochondrion outer membrane. It is found in the mitochondrion inner membrane. It carries out the reaction O-phospho-L-seryl-[protein] + H2O = L-seryl-[protein] + phosphate. It catalyses the reaction O-phospho-L-threonyl-[protein] + H2O = L-threonyl-[protein] + phosphate. Mitochondrial serine/threonine phosphatase that dephosphorylates various substrates and thus plays a role in different biological processes including cellular senescence or mitophagy. Modulates cellular senescence by regulating mitochondrial dynamics. Mechanistically, participates in mitochondrial fission through dephosphorylating DNM1L/DRP1. Additionally, dephosphorylates MFN2 in a stress-sensitive manner and consequently protects it from ubiquitination and degradation to promote mitochondrial network formation. Regulates mitophagy independent of PARKIN by interacting with and dephosphorylating FUNDC1, which interacts with LC3. Regulates anti-oxidative response by forming a tertiary complex with KEAP1 and NRF2. Regulates necroptosis by acting as a RIPK3 target and recruiting the RIPK1-RIPK3-MLKL necrosis 'attack' complex to mitochondria. The sequence is that of Serine/threonine-protein phosphatase PGAM5, mitochondrial (Pgam5) from Mus musculus (Mouse).